The sequence spans 115 residues: Chaperone protein PrsD (115 aa).

This sequence belongs to the periplasmic pilus chaperone family.

It localises to the periplasm. In terms of biological role, mediates assembly of pili by forming soluble multimeric complexes with pili subunits as an intermediate step in the assembly process. The sequence is that of Chaperone protein PrsD (prsD) from Escherichia coli.